The following is a 72-amino-acid chain: MAAKMKKGSLVRVIRAQLENSLEAQASDRRLPDYLFHSKGEVLDLNEEYALVRFYVPTPNVWLRLDQIEALA.

Belongs to the complex I NdhO subunit family. As to quaternary structure, NDH-1 can be composed of about 15 different subunits; different subcomplexes with different compositions have been identified which probably have different functions.

Its subcellular location is the cellular thylakoid membrane. It carries out the reaction a plastoquinone + NADH + (n+1) H(+)(in) = a plastoquinol + NAD(+) + n H(+)(out). The enzyme catalyses a plastoquinone + NADPH + (n+1) H(+)(in) = a plastoquinol + NADP(+) + n H(+)(out). In terms of biological role, NDH-1 shuttles electrons from an unknown electron donor, via FMN and iron-sulfur (Fe-S) centers, to quinones in the respiratory and/or the photosynthetic chain. The immediate electron acceptor for the enzyme in this species is believed to be plastoquinone. Couples the redox reaction to proton translocation, and thus conserves the redox energy in a proton gradient. Cyanobacterial NDH-1 also plays a role in inorganic carbon-concentration. In Synechocystis sp. (strain ATCC 27184 / PCC 6803 / Kazusa), this protein is NAD(P)H-quinone oxidoreductase subunit O (ndhO).